The sequence spans 239 residues: Putative GEM-like protein 3 (239 aa).

The interval 29 to 68 (HWNPELVSESPAPDEKALSSSSAARSNPYVARAPTETSDA) is disordered. The GRAM domain occupies 128-191 (KIFRQTFETV…HQLKSVNPSI (64 aa)).

Belongs to the GEM family.

This chain is Putative GEM-like protein 3, found in Arabidopsis thaliana (Mouse-ear cress).